The following is a 46-amino-acid chain: uncharacterized protein (46 aa).

This is an uncharacterized protein from Acidianus sp. F28 (AFV-2).